We begin with the raw amino-acid sequence, 91 residues long: Alpha-defensin-related sequence 12 (91 aa).

The first 19 residues, 1 to 19 (MKKLVLLSAFVLLAFQVQA), serve as a signal peptide directing secretion. Positions 20–65 (DSIQNTDEEIKTEEQPGEENQAVSISFGDPEGYALQDAAIRRARRC) are excised as a propeptide. 6 repeat units span residues 65 to 67 (CPP), 68 to 70 (CPS), 71 to 73 (CLS), 74 to 76 (CPW), 77 to 79 (CPR), and 83 to 85 (CPM). The interval 65 to 88 (CPPCPSCLSCPWCPRCLRCPMCKC) is 6 X 3 AA tandem repeats of C-P-X.

It belongs to the alpha-defensin family. Paneth cells of the small bowel.

It localises to the secreted. Apparent precursor of a secreted, cationic, proline- and cysteine-rich peptide that contains Cys-Pro-Xaa repeats. Unlike cryptdin, the proposed mature peptide region lacks the structural motif characteristic of defensins. It may have microbicidal activities. The chain is Alpha-defensin-related sequence 12 (Defa-rs12) from Mus musculus (Mouse).